Consider the following 690-residue polypeptide: Protein-glutamine gamma-glutamyltransferase 2 (690 aa).

Ala-2 is modified (N-acetylalanine). Disulfide bonds link Cys-230/Cys-370 and Cys-370/Cys-371. Active-site residues include Cys-277, His-335, and Asp-358. Ca(2+) contacts are provided by Asn-398, Asp-400, Glu-436, Glu-446, and Glu-451. The residue at position 467 (Lys-467) is an N6-acetyllysine. 479–486 (RIRVGQNM) contacts GTP. Glu-542 contacts Ca(2+). GTP is bound at residue 583–586 (RDIY). Gln-636 is covalently cross-linked (Isoglutamyl lysine isopeptide (Gln-Lys) (interchain with K-?)).

It belongs to the transglutaminase superfamily. Transglutaminase family. Monomer. Interacts with phospholipase C; promoting alpha-1 adrenergic receptor signaling. Interacts with PLCD1. The cofactor is Ca(2+). Disulfide bond formation inactivates the calcium-dependent acyltransferase activity. Cys-370 can form disulfide bonds with both Cys-230 and Cys-371: formation of a disulfide bond between Cys-230 and Cys-370 facilitates formation of the disulfide between Cys-370 and Cys-371, which promotes inactivation of the acyltransferase activity. May also form interchain disulfids between Cys-230 and Cys-370. Ca(2+) protects against disulfide bond formation and inactivation. In terms of processing, auto-transglutaminated: Forms covalent cross-links mediated by transglutaminase between Gln-636 and the epsilon-amino group of a lysine residue of itself or HMGB1, forming homopolymers and heteropolymers, respectively. Post-translationally, S-nitrosylated, leading to inactivation of the acyltransferase activity.

The protein resides in the cytoplasm. It is found in the cytosol. It localises to the nucleus. The protein localises to the chromosome. Its subcellular location is the secreted. The protein resides in the extracellular space. It is found in the extracellular matrix. It localises to the cell membrane. The protein localises to the mitochondrion. It carries out the reaction L-glutaminyl-[protein] + L-lysyl-[protein] = [protein]-L-lysyl-N(6)-5-L-glutamyl-[protein] + NH4(+). It catalyses the reaction L-glutaminyl-[protein] + serotonin = 5-serotonyl-L-glutamyl-[protein] + NH4(+). The enzyme catalyses L-glutaminyl-[protein] + dopamine = 5-dopaminyl-L-glutamyl-[protein] + NH4(+). The catalysed reaction is L-glutaminyl-[protein] + histamine = 5-histaminyl-L-glutamyl-[protein] + NH4(+). It carries out the reaction L-glutaminyl-[protein] + (R)-noradrenaline = 5-(R)-noradrenalinyl-L-glutamyl-[protein] + NH4(+). It catalyses the reaction L-glutaminyl-[protein] + H2O = L-glutamyl-[protein] + NH4(+). Acyltransferase activity is regulated by the binding of GTP and Ca(2+): inactivated by GTP, which stabilizes its closed structure, thereby obstructing the accessibility of substrates to the active sites. In contrast, Ca(2+) acts as a cofactor by inducing conformational change to the active open form. In absence of Ca(2+), Mg(2+) may bind Ca(2+)-binding sites, promoting GTP-binding and subsequent inhibition of the acyltransferase activity. Extracellularly reduced and activated by CLIC3. Calcium-dependent acyltransferase that catalyzes the formation of covalent bonds between peptide-bound glutamine and various primary amines, such as gamma-amino group of peptide-bound lysine, or mono- and polyamines, thereby producing cross-linked or aminated proteins, respectively. Involved in many biological processes, such as bone development, angiogenesis, wound healing, cellular differentiation, chromatin modification and apoptosis. Acts as a protein-glutamine gamma-glutamyltransferase by mediating the cross-linking of proteins, such as ACO2, HSPB6, FN1, HMGB1, RAP1GDS1, SLC25A4/ANT1, SPP1 and WDR54. Under physiological conditions, the protein cross-linking activity is inhibited by GTP; inhibition is relieved by Ca(2+) in response to various stresses. When secreted, catalyzes cross-linking of proteins of the extracellular matrix, such as FN1 and SPP1 resulting in the formation of scaffolds. Plays a key role during apoptosis, both by (1) promoting the cross-linking of cytoskeletal proteins resulting in condensation of the cytoplasm, and by (2) mediating cross-linking proteins of the extracellular matrix, resulting in the irreversible formation of scaffolds that stabilize the integrity of the dying cells before their clearance by phagocytosis, thereby preventing the leakage of harmful intracellular components. In addition to protein cross-linking, can use different monoamine substrates to catalyze a vast array of protein post-translational modifications: mediates aminylation of serotonin, dopamine, noradrenaline or histamine into glutamine residues of target proteins to generate protein serotonylation, dopaminylation, noradrenalinylation or histaminylation, respectively. Mediates protein serotonylation of small GTPases during activation and aggregation of platelets, leading to constitutive activation of these GTPases. Plays a key role in chromatin organization by mediating serotonylation and dopaminylation of histone H3. Catalyzes serotonylation of 'Gln-5' of histone H3 (H3Q5ser) during serotonergic neuron differentiation, thereby facilitating transcription. Acts as a mediator of neurotransmission-independent role of nuclear dopamine in ventral tegmental area (VTA) neurons: catalyzes dopaminylation of 'Gln-5' of histone H3 (H3Q5dop), thereby regulating relapse-related transcriptional plasticity in the reward system. Regulates vein remodeling by mediating serotonylation and subsequent inactivation of ATP2A2/SERCA2. Also acts as a protein deamidase by mediating the side chain deamidation of specific glutamine residues of proteins to glutamate. Catalyzes specific deamidation of protein gliadin, a component of wheat gluten in the diet. May also act as an isopeptidase cleaving the previously formed cross-links. Also able to participate in signaling pathways independently of its acyltransferase activity: acts as a signal transducer in alpha-1 adrenergic receptor-mediated stimulation of phospholipase C-delta (PLCD) activity and is required for coupling alpha-1 adrenergic agonists to the stimulation of phosphoinositide lipid metabolism. The protein is Protein-glutamine gamma-glutamyltransferase 2 of Cavia cutleri (Guinea pig).